The chain runs to 2193 residues: ATP-dependent helicase BRM (2193 aa).

Met-1 bears the N-acetylmethionine mark. The span at 1 to 10 (MQSGGSGGGP) shows a compositional bias: gly residues. Disordered regions lie at residues 1–126 (MQSG…QEGQ), 175–231 (MQDL…PGNM), 293–466 (QKAG…GFTK), 511–558 (SPAI…DNVG), and 580–649 (TSTD…ASAR). The span at 23–62 (ASTSSAASPSSSSSSVQQQQQQQQQQQQQQQLASRQQQQQ) shows a compositional bias: low complexity. A coiled-coil region spans residues 38 to 58 (VQQQQQQQQQQQQQQQLASRQ). Over residues 79 to 88 (GVQGMMGGGN) the composition is skewed to gly residues. Low complexity-rich tracts occupy residues 91 to 102 (SSPGSMQMPQQS), 110 to 126 (QQQQQQQQQGSSTQEGQ), and 180 to 192 (PSSQPQASSSKPS). Positions 204–223 (ESSSQQRNETKSHPQQQVGT) are enriched in polar residues. The segment covering 301–320 (ASQSPSIPISSQPASSSVVP) has biased composition (low complexity). Composition is skewed to polar residues over residues 325-339 (PHANSASDISGQSGS), 347-358 (STGSFASTSSPR), 383-412 (QPTNGMPSGNPLQTSANETPVLDQNASTKK), and 421-433 (QMQQPRQLNTPTP). Positions 445 to 463 (SNSSLQSGQGTQQAQQRSG) are enriched in low complexity. A QLQ domain is found at 463–499 (GFTKQQLHVLKAQILAFRRLKKGEGSLPPELLQAISP). Basic and acidic residues-rich tracts occupy residues 517 to 537 (VQDRSSDKTGEDQARSLECGK) and 611 to 621 (PRSDSTADKGK). Positions 626-638 (DGSQSKVPPQANS) are enriched in polar residues. The Nuclear localization signal 1 motif lies at 705–712 (LKKINGLL). Positions 726–795 (VLRLQIEEKK…QKAVREKQLK (70 aa)) form a coiled coil. One can recognise a Helicase ATP-binding domain in the interval 993–1158 (LSLYNNKLNG…WSLLNLLLPD (166 aa)). 1006–1013 (DEMGLGKT) is an ATP binding site. The stretch at 1109-1129 (DEAQRMKDRESVLARDLDRYR) forms a coiled coil. Residues 1312 to 1489 (ILDRILIKLQ…QYKIDMADEV (178 aa)) enclose the Helicase C-terminal domain. Disordered stretches follow at residues 1583–1775 (SKKP…DEEQ) and 1789–1894 (LRPR…NAGA). Residues 1608-1617 (KRGRPKSKKI) are compositionally biased toward basic residues. The stretch at 1618–1638 (NYKEIEDDIAGYSEESSEERN) forms a coiled coil. Position 1641 is a phosphoserine (Ser-1641). A compositionally biased stretch (acidic residues) spans 1642–1657 (GNEEEGDIRQFDDDEL). The segment covering 1821–1832 (TVVDSHSSRQDQ) has biased composition (basic and acidic residues). The segment covering 1833–1842 (SDSSSRLRSV) has biased composition (low complexity). 2 stretches are compositionally biased toward polar residues: residues 1848 to 1870 (ASTSKLHVSSPKSGRLNATQLTV) and 1882 to 1892 (DGTSPISSSNA). Positions 1895–2005 (RMSHIIQKRC…NLFFDLLKMS (111 aa)) constitute a Bromo domain. The short motif at 1901-1908 (QKRCKIVI) is the Nuclear localization signal 2 element. Polar residues predominate over residues 2022-2032 (GSAPTLVSTPT). The disordered stretch occupies residues 2022 to 2193 (GSAPTLVSTP…DSGKRRPSHL (172 aa)). A Phosphoserine modification is found at Ser-2137. A compositionally biased stretch (polar residues) spans 2149–2166 (LAQQQRWPNQPTHPNNSG).

This sequence belongs to the SNF2/RAD54 helicase family. Interacts with SWI3B, SWI3C, H3 and H4, but not with SWI3A, SWI3D or BSH. Interacts with LFY. Interacts with REF6. Binds to FGT1. Highly expressed in inflorescences and leaves. Low expression in siliques, roots and seedlings. Detected in shoot apical meristem, root meristem, vascular tissue of developing leaves, petals, stamens filaments, anthers and carpels.

The protein localises to the nucleus. It catalyses the reaction ATP + H2O = ADP + phosphate + H(+). In terms of biological role, ATPase subunit of a multiprotein complex equivalent of the SWI/SNF complex that acts by remodeling the chromatin by catalyzing an ATP-dependent alteration in the structure of nucleosomal DNA. Represses embryonic genes in leaves and controls shoot development and flowering. Activates flower homeotic genes. The association of BRM with its target genes requires REF6. Necessary to acquire heat stress (HS) memory, by globally binding to HS memory genes. The sequence is that of ATP-dependent helicase BRM from Arabidopsis thaliana (Mouse-ear cress).